We begin with the raw amino-acid sequence, 336 residues long: MPKPKEYVLKKSEEIEGTKVEGPWLDDTKSLEEVVSLYTQIGFQATHLGKAIEIWRKIEEKREKGEEIRVFLGYTSNIVSSGLREIIAWLVKHRKVDVIVTTAGGVEEDFIKALKPFILGDWIVNDAELRKKGINRIGNIFVPNDRYIEFEKYMIPFFERILEIEREKGRPLTASEFIYELGRFMDEKLGKEKEKSIIYWAYRNEIPIFCPAITDGSIGDMLYFFKEERRDRELIIDIANDIVKLNNLAVTAKETASIILGGSLPKHAIINANLFRGGSDYAIYITTAVPWDGSLSGAPPSEGVSWGKIRAKADYVEIWADATLVFPILVWMVMKR.

Lys-308 acts as the Nucleophile in catalysis.

Belongs to the deoxyhypusine synthase family. NAD(+) is required as a cofactor.

It carries out the reaction [eIF5A protein]-L-lysine + spermidine = [eIF5A protein]-deoxyhypusine + propane-1,3-diamine. It functions in the pathway protein modification; eIF5A hypusination. In terms of biological role, catalyzes the NAD-dependent oxidative cleavage of spermidine and the subsequent transfer of the butylamine moiety of spermidine to the epsilon-amino group of a specific lysine residue of the eIF-5A precursor protein to form the intermediate deoxyhypusine residue. This chain is Probable deoxyhypusine synthase, found in Pyrococcus furiosus (strain ATCC 43587 / DSM 3638 / JCM 8422 / Vc1).